Consider the following 306-residue polypeptide: UDP-3-O-acyl-N-acetylglucosamine deacetylase (306 aa).

3 residues coordinate Zn(2+): His78, His237, and Asp241. The active-site Proton donor is the His264.

Belongs to the LpxC family. Requires Zn(2+) as cofactor.

It carries out the reaction a UDP-3-O-[(3R)-3-hydroxyacyl]-N-acetyl-alpha-D-glucosamine + H2O = a UDP-3-O-[(3R)-3-hydroxyacyl]-alpha-D-glucosamine + acetate. Its pathway is glycolipid biosynthesis; lipid IV(A) biosynthesis; lipid IV(A) from (3R)-3-hydroxytetradecanoyl-[acyl-carrier-protein] and UDP-N-acetyl-alpha-D-glucosamine: step 2/6. Its function is as follows. Catalyzes the hydrolysis of UDP-3-O-myristoyl-N-acetylglucosamine to form UDP-3-O-myristoylglucosamine and acetate, the committed step in lipid A biosynthesis. The protein is UDP-3-O-acyl-N-acetylglucosamine deacetylase of Aromatoleum aromaticum (strain DSM 19018 / LMG 30748 / EbN1) (Azoarcus sp. (strain EbN1)).